A 445-amino-acid chain; its full sequence is Phosphoglucosamine mutase (445 aa).

Serine 104 acts as the Phosphoserine intermediate in catalysis. Positions 104, 243, 245, and 247 each coordinate Mg(2+). Serine 104 is modified (phosphoserine).

This sequence belongs to the phosphohexose mutase family. Mg(2+) is required as a cofactor. Post-translationally, activated by phosphorylation.

The catalysed reaction is alpha-D-glucosamine 1-phosphate = D-glucosamine 6-phosphate. In terms of biological role, catalyzes the conversion of glucosamine-6-phosphate to glucosamine-1-phosphate. This chain is Phosphoglucosamine mutase, found in Chromobacterium violaceum (strain ATCC 12472 / DSM 30191 / JCM 1249 / CCUG 213 / NBRC 12614 / NCIMB 9131 / NCTC 9757 / MK).